Consider the following 340-residue polypeptide: Glyceraldehyde-3-phosphate dehydrogenase (340 aa).

Residues 12–13, Asp40, Lys85, and Ser128 contribute to the NAD(+) site; that span reads RI. D-glyceraldehyde 3-phosphate contacts are provided by residues 158-160, Thr189, Arg204, 217-218, and Arg240; these read SCT and TG. Catalysis depends on Cys159, which acts as the Nucleophile. Lys257 participates in a covalent cross-link: Isoglutamyl lysine isopeptide (Lys-Gln) (interchain with Q-Cter in protein Pup). Asn321 is an NAD(+) binding site.

The protein belongs to the glyceraldehyde-3-phosphate dehydrogenase family. As to quaternary structure, homotetramer.

It is found in the cytoplasm. It catalyses the reaction D-glyceraldehyde 3-phosphate + phosphate + NAD(+) = (2R)-3-phospho-glyceroyl phosphate + NADH + H(+). It functions in the pathway carbohydrate degradation; glycolysis; pyruvate from D-glyceraldehyde 3-phosphate: step 1/5. Catalyzes the oxidative phosphorylation of glyceraldehyde 3-phosphate (G3P) to 1,3-bisphosphoglycerate (BPG) using the cofactor NAD. The first reaction step involves the formation of a hemiacetal intermediate between G3P and a cysteine residue, and this hemiacetal intermediate is then oxidized to a thioester, with concomitant reduction of NAD to NADH. The reduced NADH is then exchanged with the second NAD, and the thioester is attacked by a nucleophilic inorganic phosphate to produce BPG. In Mycolicibacterium smegmatis (strain ATCC 700084 / mc(2)155) (Mycobacterium smegmatis), this protein is Glyceraldehyde-3-phosphate dehydrogenase (gapA).